The sequence spans 80 residues: MKLTCMMIVAVLFLTAWTLVTADGTRDGLKNRFPKARLEMKNSEAPRSRGRCRPPGMVCGFPKPGPYCCSGWCFAVCLPV.

The signal sequence occupies residues 1 to 22 (MKLTCMMIVAVLFLTAWTLVTA). Positions 23–51 (DGTRDGLKNRFPKARLEMKNSEAPRSRGR) are excised as a propeptide. Intrachain disulfides connect Cys52/Cys69, Cys59/Cys73, and Cys68/Cys77. At Pro64 the chain carries 4-hydroxyproline.

The protein belongs to the conotoxin O1 superfamily. Expressed by the venom duct.

The protein resides in the secreted. This is Conotoxin MaIr193 from Conus marmoreus (Marble cone).